The following is a 183-amino-acid chain: Capsid protein (183 aa).

A disordered region spans residues 143–183; sequence LPETTVVRRRGRSPRRRTPSPRRRRSKSPRRRRSQSRESQC. The span at 149-176 shows a compositional bias: basic residues; it reads VRRRGRSPRRRTPSPRRRRSKSPRRRRS. Phosphoserine; by host occurs at positions 155, 162, and 170. Residues 155-160 form a 1; half-length repeat; that stretch reads SPRRRT. The interval 155-176 is 3 X 7 AA repeats of S-P-R-R-R-[PR]-S; that stretch reads SPRRRTPSPRRRRSKSPRRRRS. Positions 158 to 175 match the Bipartite nuclear localization signal motif; that stretch reads RRTPSPRRRRSKSPRRRR. Repeat copies occupy residues 162–168 and 170–176. An RNA binding region spans residues 177 to 183; that stretch reads QSRESQC.

It belongs to the orthohepadnavirus core antigen family. As to quaternary structure, homodimerizes, then multimerizes. Interacts with cytosol exposed regions of viral L glycoprotein present in the reticulum-to-Golgi compartment. Interacts with human FLNB. Phosphorylated form interacts with host importin alpha; this interaction depends on the exposure of the NLS, which itself depends upon genome maturation and/or phosphorylation of the capsid protein. Interacts with host NUP153. Post-translationally, phosphorylated by host SRPK1, SRPK2, and maybe protein kinase C or GAPDH. Phosphorylation is critical for pregenomic RNA packaging. Protein kinase C phosphorylation is stimulated by HBx protein and may play a role in transport of the viral genome to the nucleus at the late step during the viral replication cycle.

The protein resides in the virion. Its subcellular location is the host cytoplasm. In terms of biological role, self assembles to form an icosahedral capsid. Most capsids appear to be large particles with an icosahedral symmetry of T=4 and consist of 240 copies of capsid protein, though a fraction forms smaller T=3 particles consisting of 180 capsid proteins. Entering capsids are transported along microtubules to the nucleus. Phosphorylation of the capsid is thought to induce exposure of nuclear localization signal in the C-terminal portion of the capsid protein that allows binding to the nuclear pore complex via the importin (karyopherin-) alpha and beta. Capsids are imported in intact form through the nuclear pore into the nuclear basket, where it probably binds NUP153. Only capsids that contain the mature viral genome can release the viral DNA and capsid protein into the nucleoplasm. Immature capsids get stuck in the basket. Capsids encapsulate the pre-genomic RNA and the P protein. Pre-genomic RNA is reverse-transcribed into DNA while the capsid is still in the cytoplasm. The capsid can then either be directed to the nucleus, providing more genomes for transcription, or bud through the endoplasmic reticulum to provide new virions. The chain is Capsid protein from Homo sapiens (Human).